The primary structure comprises 136 residues: MDQTPIRVLLAKVGLDGHDRGVKVVARALRDAGMDVIYSGLHRTPEEVVNTAIQEDVDVLGVSLLSGVQLTVFPKIFKLLDERGAGDLIVIAGGVMPDEDAAAIRKLGVREVLLQDTPPQAIIDSIRSLVAARGAR.

Positions 5–133 constitute a B12-binding domain; the sequence is PIRVLLAKVG…DSIRSLVAAR (129 aa). Adenosylcob(III)alamin is bound at residue H18.

It belongs to the acyl-CoA mutase small subunit family. In terms of assembly, homotetramer composed of two large substrate-binding subunits (HcmA) and two small cobalamin-binding subunits (HcmB). Adenosylcob(III)alamin serves as cofactor.

It catalyses the reaction 2-hydroxyisobutanoyl-CoA = (3S)-3-hydroxybutanoyl-CoA. Together with HcmA, catalyzes the isomerization of 2-hydroxyisobutyryl-CoA and 3-hydroxybutyryl-CoA. Is specific for 2-hydroxyisobutyryl-CoA and (S)-3-hydroxybutyryl-CoA, and shows only very low activity with (R)-3-hydroxybutyryl-CoA, isobutyryl-CoA and butyryl-CoA. In vitro, can isomerize pivalyl-CoA and isovaleryl-CoA, with much lower efficiency. Plays a central role in the degradation of substrates bearing a tert-butyl moiety, such as the fuel oxygenate methyl tert-butyl ether (MTBE) and its metabolites. This chain is 2-hydroxyisobutanoyl-CoA mutase small subunit, found in Aquincola tertiaricarbonis.